A 159-amino-acid chain; its full sequence is MFLSGRDLVLLGVVKGHSNGAIQPAGVDLSVGEIESLADAGFLGEEDKIMPKGDRIQCEYGVCELEPGAYRLRFNEVVSIPPGHVGFCFPRSSLLRMGCYLGCAVWDPGYTGRGQAMLLVANPHGLRLEMGSRIAQLVVARVEGPLTSLYKGDYQGEGL.

It belongs to the dCTP deaminase family. Archaeal dUTPase subfamily.

It carries out the reaction dUTP + H2O = dUMP + diphosphate + H(+). It participates in pyrimidine metabolism; dUMP biosynthesis; dUMP from dCTP (dUTP route): step 2/2. Its function is as follows. This enzyme is involved in nucleotide metabolism: it produces dUMP, the immediate precursor of thymidine nucleotides and it decreases the intracellular concentration of dUTP so that uracil cannot be incorporated into DNA. The sequence is that of Probable deoxyuridine 5'-triphosphate nucleotidohydrolase from Aeropyrum pernix (strain ATCC 700893 / DSM 11879 / JCM 9820 / NBRC 100138 / K1).